The following is a 202-amino-acid chain: 3-isopropylmalate dehydratase small subunit (202 aa).

This sequence belongs to the LeuD family. LeuD type 1 subfamily. In terms of assembly, heterodimer of LeuC and LeuD.

The catalysed reaction is (2R,3S)-3-isopropylmalate = (2S)-2-isopropylmalate. It participates in amino-acid biosynthesis; L-leucine biosynthesis; L-leucine from 3-methyl-2-oxobutanoate: step 2/4. In terms of biological role, catalyzes the isomerization between 2-isopropylmalate and 3-isopropylmalate, via the formation of 2-isopropylmaleate. The polypeptide is 3-isopropylmalate dehydratase small subunit (Rhizobium johnstonii (strain DSM 114642 / LMG 32736 / 3841) (Rhizobium leguminosarum bv. viciae)).